Reading from the N-terminus, the 68-residue chain is MKAKEIRELTTAEIEQKIKALKEELFNLRFQLATGQLENTARIRQVRKDIARMKTIIREREIAANAKK.

It belongs to the universal ribosomal protein uL29 family.

The sequence is that of Large ribosomal subunit protein uL29 from Geobacillus sp. (strain WCH70).